The primary structure comprises 390 residues: GTPase Obg (390 aa).

Residues 1–159 (MKFIDEALIR…RDLQLELMLL (159 aa)) form the Obg domain. The OBG-type G domain maps to 160–333 (ADVGMLGLPN…LCRDIMDFIE (174 aa)). GTP-binding positions include 166-173 (GLPNAGKS), 191-195 (FTTLV), 213-216 (DIPG), 283-286 (NKID), and 314-316 (SAV). Residues Ser173 and Thr193 each coordinate Mg(2+). The interval 363–390 (DHQFEDEDEDWDDWSEEDEEGVETIYKP) is disordered. Residues 366–384 (FEDEDEDWDDWSEEDEEGV) show a composition bias toward acidic residues.

Belongs to the TRAFAC class OBG-HflX-like GTPase superfamily. OBG GTPase family. In terms of assembly, monomer. Mg(2+) serves as cofactor.

It localises to the cytoplasm. Its function is as follows. An essential GTPase which binds GTP, GDP and possibly (p)ppGpp with moderate affinity, with high nucleotide exchange rates and a fairly low GTP hydrolysis rate. Plays a role in control of the cell cycle, stress response, ribosome biogenesis and in those bacteria that undergo differentiation, in morphogenesis control. This Pasteurella multocida (strain Pm70) protein is GTPase Obg.